A 206-amino-acid chain; its full sequence is Imidazoleglycerol-phosphate dehydratase (206 aa).

Belongs to the imidazoleglycerol-phosphate dehydratase family.

It is found in the cytoplasm. It catalyses the reaction D-erythro-1-(imidazol-4-yl)glycerol 3-phosphate = 3-(imidazol-4-yl)-2-oxopropyl phosphate + H2O. The protein operates within amino-acid biosynthesis; L-histidine biosynthesis; L-histidine from 5-phospho-alpha-D-ribose 1-diphosphate: step 6/9. The protein is Imidazoleglycerol-phosphate dehydratase of Synechococcus sp. (strain JA-3-3Ab) (Cyanobacteria bacterium Yellowstone A-Prime).